The primary structure comprises 476 residues: Hydrogenase-4 component F homolog (476 aa).

Helical transmembrane passes span 1 to 21, 25 to 45, 54 to 74, 120 to 140, 153 to 173, 202 to 222, 235 to 255, 270 to 290, 307 to 327, 368 to 388, 402 to 422, and 442 to 462; these read MSAA…SQIS, ISSW…LFLL, FFLV…IGFT, IGLM…MVGI, YFIL…LFYI, LVNI…GLFP, PTPI…YAIL, AGPL…LMFY, MGII…AGLL, LGWG…MGVF, SPLL…ALIL, and LYLP…YIPP.

The protein belongs to the complex I subunit 5 family.

Its subcellular location is the cell inner membrane. This chain is Hydrogenase-4 component F homolog (hyfF), found in Methylacidiphilum infernorum (isolate V4) (Methylokorus infernorum (strain V4)).